A 400-amino-acid polypeptide reads, in one-letter code: Elongation factor Tu 1 (400 aa).

Residues 10-209 (KPHVNIGTIG…AVDEYIPTPQ (200 aa)) form the tr-type G domain. A G1 region spans residues 19 to 26 (GHVDHGKT). 19–26 (GHVDHGKT) contributes to the GTP binding site. Residue T26 participates in Mg(2+) binding. The interval 60-64 (GITIN) is G2. The interval 81 to 84 (DCPG) is G3. Residues 81 to 85 (DCPGH) and 136 to 139 (NKAD) contribute to the GTP site. Residues 136-139 (NKAD) form a G4 region. The tract at residues 174–176 (SAL) is G5.

This sequence belongs to the TRAFAC class translation factor GTPase superfamily. Classic translation factor GTPase family. EF-Tu/EF-1A subfamily. Monomer.

The protein resides in the cytoplasm. It carries out the reaction GTP + H2O = GDP + phosphate + H(+). Its function is as follows. GTP hydrolase that promotes the GTP-dependent binding of aminoacyl-tRNA to the A-site of ribosomes during protein biosynthesis. This Pelotomaculum thermopropionicum (strain DSM 13744 / JCM 10971 / SI) protein is Elongation factor Tu 1.